The chain runs to 468 residues: UDP-N-acetylmuramate--L-alanine ligase (468 aa).

114 to 120 (GTHGKTT) is an ATP binding site.

Belongs to the MurCDEF family.

The protein localises to the cytoplasm. It carries out the reaction UDP-N-acetyl-alpha-D-muramate + L-alanine + ATP = UDP-N-acetyl-alpha-D-muramoyl-L-alanine + ADP + phosphate + H(+). It functions in the pathway cell wall biogenesis; peptidoglycan biosynthesis. Cell wall formation. In Methylocella silvestris (strain DSM 15510 / CIP 108128 / LMG 27833 / NCIMB 13906 / BL2), this protein is UDP-N-acetylmuramate--L-alanine ligase.